The primary structure comprises 332 residues: MLFLQFLFLDVVLGGSITKNVVQENISFYLMQISSYANQSWVQNCGSGWLGELQTHGWDSESGTIIFLHTWSRGNFSNEELEDIPLLFHVYFSGLSLEVQDRVSQLQIKYPFDIQARAGCELHSGEPPKGFLYGALNGLNFLSYQNKSWVPSPEGGNRAQKVCDLLNTYEGIKETAYHLIRDTCPRFLLGLLDAGKMDLQRQVRPEVWLSSSPNLKPGRLLLACHVSGFYPKPIWVMWMRGAQEQLETKQGDILPHADGTWYLRVTLDVAAKEAAGLSCRVRHSSLRDQDIILYWGHGLSVILITFAVIVPLVLLIILVLLCKKCCTYQGIP.

The first 17 residues, 1–17 (MLFLQFLFLDVVLGGSI), serve as a signal peptide directing secretion. At 18-300 (TKNVVQENIS…IILYWGHGLS (283 aa)) the chain is on the extracellular side. N-linked (GlcNAc...) asparagine glycans are attached at residues Asn-25, Asn-38, Asn-75, and Asn-146. 2 disulfide bridges follow: Cys-120–Cys-184 and Cys-224–Cys-279. One can recognise an Ig-like domain in the interval 205–292 (PEVWLSSSPN…HSSLRDQDII (88 aa)). The chain crosses the membrane as a helical span at residues 301 to 321 (VILITFAVIVPLVLLIILVLL). Over 322–332 (CKKCCTYQGIP) the chain is Cytoplasmic.

Heterodimer with B2M (beta-2-microglobulin).

It is found in the cell membrane. Its subcellular location is the endosome membrane. Functionally, antigen-presenting protein that binds self and non-self lipid and glycolipid antigens and presents them to T-cell receptors on natural killer T-cells. This chain is T-cell surface glycoprotein CD1c3 (CD1C3), found in Cavia porcellus (Guinea pig).